A 427-amino-acid chain; its full sequence is Enolase (427 aa).

A (2R)-2-phosphoglycerate-binding site is contributed by Q163. The Proton donor role is filled by E205. Mg(2+) contacts are provided by D242, E285, and D312. Residues K337, R366, S367, and K388 each contribute to the (2R)-2-phosphoglycerate site. The Proton acceptor role is filled by K337.

This sequence belongs to the enolase family. It depends on Mg(2+) as a cofactor.

It localises to the cytoplasm. It is found in the secreted. Its subcellular location is the cell surface. The catalysed reaction is (2R)-2-phosphoglycerate = phosphoenolpyruvate + H2O. Its pathway is carbohydrate degradation; glycolysis; pyruvate from D-glyceraldehyde 3-phosphate: step 4/5. Its function is as follows. Catalyzes the reversible conversion of 2-phosphoglycerate (2-PG) into phosphoenolpyruvate (PEP). It is essential for the degradation of carbohydrates via glycolysis. This chain is Enolase, found in Polaromonas sp. (strain JS666 / ATCC BAA-500).